The chain runs to 279 residues: Thymidylate synthase (279 aa).

Arg-21 serves as a coordination point for dUMP. His-51 serves as a coordination point for (6R)-5,10-methylene-5,6,7,8-tetrahydrofolate. 126 to 127 (RR) serves as a coordination point for dUMP. Residue Cys-159 is the Nucleophile of the active site. DUMP is bound by residues 179-182 (RSAD), Asn-190, and 220-222 (HLY). A (6R)-5,10-methylene-5,6,7,8-tetrahydrofolate-binding site is contributed by Asp-182. Position 278 (Ala-278) interacts with (6R)-5,10-methylene-5,6,7,8-tetrahydrofolate.

It belongs to the thymidylate synthase family. Bacterial-type ThyA subfamily. In terms of assembly, homodimer.

The protein localises to the cytoplasm. The enzyme catalyses dUMP + (6R)-5,10-methylene-5,6,7,8-tetrahydrofolate = 7,8-dihydrofolate + dTMP. It participates in pyrimidine metabolism; dTTP biosynthesis. Its function is as follows. Catalyzes the reductive methylation of 2'-deoxyuridine-5'-monophosphate (dUMP) to 2'-deoxythymidine-5'-monophosphate (dTMP) while utilizing 5,10-methylenetetrahydrofolate (mTHF) as the methyl donor and reductant in the reaction, yielding dihydrofolate (DHF) as a by-product. This enzymatic reaction provides an intracellular de novo source of dTMP, an essential precursor for DNA biosynthesis. The sequence is that of Thymidylate synthase from Marinobacter nauticus (strain ATCC 700491 / DSM 11845 / VT8) (Marinobacter aquaeolei).